Reading from the N-terminus, the 555-residue chain is Solute carrier family 2, facilitated glucose transporter member 10 (555 aa).

Residues 1-15 lie on the Cytoplasmic side of the membrane; the sequence is MGLSSPTLILAATVS. Residues 16–36 form a helical membrane-spanning segment; sequence LLGGIVFGYELGIISGALLVL. Residues 37–48 lie on the Extracellular side of the membrane; that stretch reads KTVYQLTCFEQE. A helical membrane pass occupies residues 49-69; sequence ALVSAVLFGALLASLIGGIII. The Cytoplasmic segment spans residues 70–82; that stretch reads DRWGRRTAILASN. The helical transmembrane segment at 83 to 103 threads the bilayer; sequence LVVLAGSIILIATSTFWWLIV. Residues 104–105 are Extracellular-facing; the sequence is GR. A helical transmembrane segment spans residues 106–126; the sequence is VTIGFAISISSMACCIYVSEI. Topologically, residues 127–132 are cytoplasmic; that stretch reads VRPHQR. Residues 133 to 153 form a helical membrane-spanning segment; it reads GMLVSLYETGITVGILISYAM. Topologically, residues 154 to 165 are extracellular; that stretch reads NYFLSGVNESWK. A glycan (N-linked (GlcNAc...) asparagine) is linked at Asn161. The chain crosses the membrane as a helical span at residues 166 to 186; it reads YMFGLAIVPAAFQFISILFLP. Residues 187–240 are Cytoplasmic-facing; it reads SKPHKLNFWEQDTDDGFIELEETGEAGEFKPDTYDRQYTFLDLFRSKDNMRTRT. A helical membrane pass occupies residues 241–261; that stretch reads LLGLGLVLFQQFTGQPNVLYY. 250-251 serves as a coordination point for D-glucose; it reads QQ. Topologically, residues 262 to 277 are extracellular; that stretch reads ASTIFQSVGFQSNSSA. Asn274 carries N-linked (GlcNAc...) asparagine glycosylation. A helical membrane pass occupies residues 278-298; that stretch reads VLASVGLGVVKVASTLIAICF. Residues 299 to 305 lie on the Cytoplasmic side of the membrane; it reads ADKAGRR. Residues 306–326 form a helical membrane-spanning segment; it reads ILLLAGCIVMTIAITGIGIVS. At 327–415 the chain is on the extracellular side; it reads FTVKMDSHRD…ASPELPSNYT (89 aa). Residues Asn344, Asn351, Asn400, and Asn413 are each glycosylated (N-linked (GlcNAc...) asparagine). A helical transmembrane segment spans residues 416 to 436; sequence ILNWITLLSMMAFVSAFSIGF. At 437–464 the chain is on the cytoplasmic side; sequence GPMTWIVLSEIYPADIRGRAFAFCNSFN. Trp441 contributes to the D-glucose binding site. The helical transmembrane segment at 465–483 threads the bilayer; it reads WAANLLITLTFLDVIASIG. Over 484-485 the chain is Extracellular; the sequence is LS. A helical transmembrane segment spans residues 486–506; sequence WTFLLYGVVGLLAIAFIYFFI. The Cytoplasmic portion of the chain corresponds to 507–555; it reads PETKGQSLEEIDKQFSTKRILQKRETSKGVGKRPSSGPPYQRIGKASPS. The disordered stretch occupies residues 528 to 555; it reads QKRETSKGVGKRPSSGPPYQRIGKASPS.

Belongs to the major facilitator superfamily. Sugar transporter (TC 2.A.1.1) family. Glucose transporter subfamily.

It is found in the endomembrane system. Its subcellular location is the cytoplasm. It localises to the perinuclear region. The enzyme catalyses D-glucose(out) = D-glucose(in). Its function is as follows. Facilitative glucose transporter required for the development of the cardiovascular system. The polypeptide is Solute carrier family 2, facilitated glucose transporter member 10 (Xenopus tropicalis (Western clawed frog)).